Reading from the N-terminus, the 585-residue chain is Neopullulanase 2 (585 aa).

Residues Asn-143, Asp-145, Asn-148, Asp-149, Gly-169, and Asp-171 each coordinate Ca(2+). 2 residues coordinate substrate: His-244 and Arg-323. Asp-325 functions as the Nucleophile in the catalytic mechanism. Glu-354 functions as the Proton donor in the catalytic mechanism. Substrate contacts are provided by residues 420–421, Asp-465, and Arg-469; that span reads HD.

This sequence belongs to the glycosyl hydrolase 13 family. Monomer. The cofactor is Ca(2+).

It catalyses the reaction Hydrolysis of pullulan to panose (6-alpha-D-glucosylmaltose).. Its function is as follows. Hydrolyzes pullulan efficiently but only a small amount of starch. Endohydrolysis of 1,4-alpha-glucosidic linkages in pullulan to form panose. Also cleaves (1-6)-alpha-glucosidic linkages to form maltotriose. The sequence is that of Neopullulanase 2 (tvaII) from Thermoactinomyces vulgaris.